Here is a 125-residue protein sequence, read N- to C-terminus: Large ribosomal subunit protein bL12 (125 aa).

It belongs to the bacterial ribosomal protein bL12 family. Homodimer. Part of the ribosomal stalk of the 50S ribosomal subunit. Forms a multimeric L10(L12)X complex, where L10 forms an elongated spine to which 2 to 4 L12 dimers bind in a sequential fashion. Binds GTP-bound translation factors.

Its function is as follows. Forms part of the ribosomal stalk which helps the ribosome interact with GTP-bound translation factors. Is thus essential for accurate translation. This chain is Large ribosomal subunit protein bL12, found in Campylobacter jejuni subsp. jejuni serotype O:6 (strain 81116 / NCTC 11828).